The primary structure comprises 107 residues: L-amino-acid oxidase (107 aa).

35–38 (GPMR) lines the FAD pocket. 2 residues coordinate substrate: Arg-38 and His-49.

The protein belongs to the flavin monoamine oxidase family. FIG1 subfamily. As to quaternary structure, homodimer; non-covalently linked. Requires FAD as cofactor. In terms of processing, N-glycosylated. As to expression, expressed by the venom gland.

It localises to the secreted. It catalyses the reaction an L-alpha-amino acid + O2 + H2O = a 2-oxocarboxylate + H2O2 + NH4(+). The enzyme catalyses L-leucine + O2 + H2O = 4-methyl-2-oxopentanoate + H2O2 + NH4(+). It carries out the reaction L-phenylalanine + O2 + H2O = 3-phenylpyruvate + H2O2 + NH4(+). The catalysed reaction is L-tryptophan + O2 + H2O = indole-3-pyruvate + H2O2 + NH4(+). It catalyses the reaction L-methionine + O2 + H2O = 4-methylsulfanyl-2-oxobutanoate + H2O2 + NH4(+). The enzyme catalyses L-isoleucine + O2 + H2O = (S)-3-methyl-2-oxopentanoate + H2O2 + NH4(+). It carries out the reaction L-arginine + O2 + H2O = 5-guanidino-2-oxopentanoate + H2O2 + NH4(+). The catalysed reaction is L-histidine + O2 + H2O = 3-(imidazol-5-yl)pyruvate + H2O2 + NH4(+). Functionally, catalyzes an oxidative deamination of predominantly hydrophobic and aromatic L-amino acids, thus producing hydrogen peroxide that may contribute to the diverse toxic effects of this enzyme. Shows high activity on L-Met, moderate activity on L-Trp, L-Leu, L-His, L-Phe, L-Arg, L-Ile, low activity on L-Val, L-Glu, L-Lys, L-Gln, L-Asn, L-Tyr, L-Ala, and no activity on L-Asp, L-Ser, L-Pro, L-Gly, L-Thr and L-Cys. Shows antimicrobial activity inhibiting the growth of both Gram-negative and Gram-positive bacteria. Also inhibits platelet aggregation induced by ADP or collagen. Effects of snake L-amino oxidases on platelets are controversial, since they either induce aggregation or inhibit agonist-induced aggregation. These different effects are probably due to different experimental conditions. This protein may also induce hemorrhage, hemolysis, edema, apoptosis, and have antiparasitic activities. This is L-amino-acid oxidase from Macrovipera lebetinus (Levantine viper).